The following is a 401-amino-acid chain: Imidazolonepropionase (401 aa).

Fe(3+)-binding residues include histidine 70 and histidine 72. Residues histidine 70 and histidine 72 each contribute to the Zn(2+) site. 4-imidazolone-5-propanoate is bound by residues arginine 79, tyrosine 142, and histidine 175. Tyrosine 142 lines the N-formimidoyl-L-glutamate pocket. Position 238 (histidine 238) interacts with Fe(3+). Histidine 238 lines the Zn(2+) pocket. Glutamine 241 is a binding site for 4-imidazolone-5-propanoate. Residue aspartate 313 coordinates Fe(3+). Aspartate 313 contacts Zn(2+). Asparagine 315 and glycine 317 together coordinate N-formimidoyl-L-glutamate. Threonine 318 is a 4-imidazolone-5-propanoate binding site.

Belongs to the metallo-dependent hydrolases superfamily. HutI family. The cofactor is Zn(2+). Fe(3+) is required as a cofactor.

Its subcellular location is the cytoplasm. The catalysed reaction is 4-imidazolone-5-propanoate + H2O = N-formimidoyl-L-glutamate. It functions in the pathway amino-acid degradation; L-histidine degradation into L-glutamate; N-formimidoyl-L-glutamate from L-histidine: step 3/3. Functionally, catalyzes the hydrolytic cleavage of the carbon-nitrogen bond in imidazolone-5-propanoate to yield N-formimidoyl-L-glutamate. It is the third step in the universal histidine degradation pathway. This Xanthomonas oryzae pv. oryzae (strain MAFF 311018) protein is Imidazolonepropionase.